Consider the following 406-residue polypeptide: Succinylornithine transaminase (406 aa).

Lysine 252 carries the N6-(pyridoxal phosphate)lysine modification.

It belongs to the class-III pyridoxal-phosphate-dependent aminotransferase family. AstC subfamily. Requires pyridoxal 5'-phosphate as cofactor.

The catalysed reaction is N(2)-succinyl-L-ornithine + 2-oxoglutarate = N-succinyl-L-glutamate 5-semialdehyde + L-glutamate. It participates in amino-acid degradation; L-arginine degradation via AST pathway; L-glutamate and succinate from L-arginine: step 3/5. Its function is as follows. Catalyzes the transamination of N(2)-succinylornithine and alpha-ketoglutarate into N(2)-succinylglutamate semialdehyde and glutamate. Can also act as an acetylornithine aminotransferase. The protein is Succinylornithine transaminase of Citrobacter koseri (strain ATCC BAA-895 / CDC 4225-83 / SGSC4696).